The sequence spans 1069 residues: MPLNKDIKKVLVIGSGPIVIGQAAEFDYSGTQACEALKSEGIEVVLVNSNPATIMTDKEVADKVYLEPLTLEFVEKVIAKERPDSLLAGMGGQTGLNLAVELHDSGILEKYNVKVIGTSIASIKEGEDRELFRDMMNRIGEPVIKSEIVTDLTAGLEFANKIGYPVIVRPAYTLGGSGGGIADDEEQLRTILESGLQLSTIGQVLLEKSVKGWKEVEYEVMRDSYGNCITVCNMENIDPVGIHTGDSIVVAPSQTLSDKEYQMLRTASINIINAVGIEGGCNVQFSLNPNSFEYAVIEINPRVSRSSALASKATGYPIAKLAAKIALGYGLDEIKNAVTQKTYACFEPTLDYVVVKIPKWPFDKFFGADRELGTKMMATGEIMAIGANFEQAFLKGIRSLEIGKYSLDHNKFKEYSISKLKSIVMKPDDERIFALAEMIRRDYMIDRINKITGIDMFFLEKIKWIVEEEQRLKLSKIEDLDKEWLHHLKKKGFSDKAIADMLKVSPDDVYRLRDIWSIKPSYKMVDTCGGEFEALSPYYYSTYEQYDEVEVSNNKKVIVIGSGPIRIGQGIEFDYASVHCVKALKKLGIETIIVNNNPETVSTDFDVSDKLYFEPLTEEDVLNIIEKEKPDGVILQFGGQTAIKLANFLKEQNIVTLGTTADQIDMAEDREKFDELLERLGISRPKGKGIWSLEEGLEEAKRLKFPVLVRPSYVIGGQGMEITHDEEELTYYLENAFAKDSKNPILIDKYLMGREIEVDAISDGENILIPGIMEHLERAGVHSGDSVTMYPSQNISDKIKADVLEYTKKLALAIGIKGMINIQFIEFEGELYVIEVNPRASRTVPYISKVSGVPIVDLATQVMLGAKLKELGYGIDVYKEPELVSVKVPVFSTQKLPNVEVSLGPEMRSTGEVLGVGRNIKEALYKGFVGAYMYPSKEKGKILATINKHDKAEFLPIAKDLASVGYKFIATSGTCALLKEAGIEVEEIRKIDEEEPNILDIVKNREVDLVVNTPTKGNDSKRDGFLIRRAAVERNLGVITALDTLRAIADVELEKFDENKDLEVFNIAK.

The segment at 1–401 (MPLNKDIKKV…AFLKGIRSLE (401 aa)) is carboxyphosphate synthetic domain. The ATP site is built by arginine 129, arginine 169, glycine 175, glycine 176, lysine 208, valine 210, glutamate 215, glycine 241, isoleucine 242, histidine 243, glutamine 284, and glutamate 298. Residues 133–327 (RDMMNRIGEP…IAKLAAKIAL (195 aa)) enclose the ATP-grasp 1 domain. 3 residues coordinate Mg(2+): glutamine 284, glutamate 298, and asparagine 300. The Mn(2+) site is built by glutamine 284, glutamate 298, and asparagine 300. The segment at 402–549 (IGKYSLDHNK…YSTYEQYDEV (148 aa)) is oligomerization domain. Positions 550–932 (EVSNNKKVIV…ALYKGFVGAY (383 aa)) are carbamoyl phosphate synthetic domain. The region spanning 674-864 (DELLERLGIS…IVDLATQVML (191 aa)) is the ATP-grasp 2 domain. ATP-binding residues include arginine 710, lysine 749, leucine 751, glutamate 755, glycine 780, valine 781, histidine 782, serine 783, glutamine 823, and glutamate 835. Mg(2+)-binding residues include glutamine 823, glutamate 835, and asparagine 837. The Mn(2+) site is built by glutamine 823, glutamate 835, and asparagine 837. One can recognise an MGS-like domain in the interval 932 to 1069 (YMYPSKEKGK…KDLEVFNIAK (138 aa)). The interval 933–1069 (MYPSKEKGKI…KDLEVFNIAK (137 aa)) is allosteric domain.

It belongs to the CarB family. As to quaternary structure, composed of two chains; the small (or glutamine) chain promotes the hydrolysis of glutamine to ammonia, which is used by the large (or ammonia) chain to synthesize carbamoyl phosphate. Tetramer of heterodimers (alpha,beta)4. It depends on Mg(2+) as a cofactor. Mn(2+) is required as a cofactor.

The catalysed reaction is hydrogencarbonate + L-glutamine + 2 ATP + H2O = carbamoyl phosphate + L-glutamate + 2 ADP + phosphate + 2 H(+). The enzyme catalyses hydrogencarbonate + NH4(+) + 2 ATP = carbamoyl phosphate + 2 ADP + phosphate + 2 H(+). Its pathway is amino-acid biosynthesis; L-arginine biosynthesis; carbamoyl phosphate from bicarbonate: step 1/1. It participates in pyrimidine metabolism; UMP biosynthesis via de novo pathway; (S)-dihydroorotate from bicarbonate: step 1/3. Large subunit of the glutamine-dependent carbamoyl phosphate synthetase (CPSase). CPSase catalyzes the formation of carbamoyl phosphate from the ammonia moiety of glutamine, carbonate, and phosphate donated by ATP, constituting the first step of 2 biosynthetic pathways, one leading to arginine and/or urea and the other to pyrimidine nucleotides. The large subunit (synthetase) binds the substrates ammonia (free or transferred from glutamine from the small subunit), hydrogencarbonate and ATP and carries out an ATP-coupled ligase reaction, activating hydrogencarbonate by forming carboxy phosphate which reacts with ammonia to form carbamoyl phosphate. The sequence is that of Carbamoyl phosphate synthase large chain from Clostridium beijerinckii (strain ATCC 51743 / NCIMB 8052) (Clostridium acetobutylicum).